A 329-amino-acid chain; its full sequence is DNA-directed RNA polymerase subunit alpha (329 aa).

The alpha N-terminal domain (alpha-NTD) stretch occupies residues 1 to 234 (MQGSVTEFLK…EQLDAFVELR (234 aa)). Residues 248–329 (FDPILLRPVD…WPPASLADDL (82 aa)) are alpha C-terminal domain (alpha-CTD).

Belongs to the RNA polymerase alpha chain family. As to quaternary structure, homodimer. The RNAP catalytic core consists of 2 alpha, 1 beta, 1 beta' and 1 omega subunit. When a sigma factor is associated with the core the holoenzyme is formed, which can initiate transcription.

The catalysed reaction is RNA(n) + a ribonucleoside 5'-triphosphate = RNA(n+1) + diphosphate. In terms of biological role, DNA-dependent RNA polymerase catalyzes the transcription of DNA into RNA using the four ribonucleoside triphosphates as substrates. This chain is DNA-directed RNA polymerase subunit alpha, found in Shewanella sp. (strain ANA-3).